The chain runs to 769 residues: Disintegrin and metalloproteinase domain-containing protein 11 (769 aa).

The N-terminal stretch at methionine 1–glycine 23 is a signal peptide. The propeptide occupies threonine 24–arginine 225. Residues glycine 40–glycine 78 form a disordered region. The segment covering glutamate 61–glutamine 73 has biased composition (basic and acidic residues). 2 N-linked (GlcNAc...) asparagine glycosylation sites follow: asparagine 96 and asparagine 163. The Extracellular segment spans residues glutamine 226 to asparagine 734. A Peptidase M12B domain is found at lysine 239–proline 438. The interval glycine 332–alanine 769 is required for localization to cerebellar cortex basket cell terminals. Also required for localization of KCNA1, KCNA2, DLG4 and ADAM22 to cerebellar cortex basket cell terminal perisomatic axons and pinceaux. Intrachain disulfides connect cysteine 349-cysteine 433, cysteine 392-cysteine 417, cysteine 394-cysteine 401, and cysteine 503-cysteine 523. The region spanning proline 444–aspartate 531 is the Disintegrin domain. N-linked (GlcNAc...) asparagine glycans are attached at residues asparagine 605 and asparagine 673. Intrachain disulfides connect cysteine 677–cysteine 692, cysteine 686–cysteine 698, and cysteine 700–cysteine 709. The EGF-like domain occupies cysteine 677–cysteine 709. The helical transmembrane segment at isoleucine 735–glycine 755 threads the bilayer. At tryptophan 756–alanine 769 the chain is on the cytoplasmic side.

As to quaternary structure, interacts with LGI1 and LGI4. Interacts with KCNA1/KV1.1, KCNA2/KV1.2, DLG4/PSD-95 and ADAM22. Post-translationally, the precursor is cleaved by a furin endopeptidase. As to expression, expressed predominantly in brain. Slightly detected or not at all in other tissues.

It is found in the presynaptic cell membrane. Its subcellular location is the perikaryon. It localises to the cell projection. The protein localises to the axon. Functionally, probable ligand for integrin in the brain. This is a non catalytic metalloprotease-like protein. Required for localization of the potassium channel subunit proteins KCNA1/KV1.1 and KCNA2/KV1.2 at cerebellar cortex basket cell distal terminals, is thereby involved in ephaptic inhibitory synchronization of Purkinje cell firing and response to stress. Plays a role in spatial learning and motor coordination. Involved in the nociceptive pain response to chemical-derived stimulation. The polypeptide is Disintegrin and metalloproteinase domain-containing protein 11 (ADAM11) (Homo sapiens (Human)).